Reading from the N-terminus, the 338-residue chain is Lipoate-protein ligase A (338 aa).

Residues 29 to 216 (PATQRVLFLW…AFFAHYGERI (188 aa)) enclose the BPL/LPL catalytic domain. ATP is bound by residues Arg71, 76–79 (GAVF), and Lys134. Lys134 serves as a coordination point for (R)-lipoate.

Belongs to the LplA family. Monomer.

The protein resides in the cytoplasm. The catalysed reaction is L-lysyl-[lipoyl-carrier protein] + (R)-lipoate + ATP = N(6)-[(R)-lipoyl]-L-lysyl-[lipoyl-carrier protein] + AMP + diphosphate + H(+). It participates in protein modification; protein lipoylation via exogenous pathway; protein N(6)-(lipoyl)lysine from lipoate: step 1/2. It functions in the pathway protein modification; protein lipoylation via exogenous pathway; protein N(6)-(lipoyl)lysine from lipoate: step 2/2. Catalyzes both the ATP-dependent activation of exogenously supplied lipoate to lipoyl-AMP and the transfer of the activated lipoyl onto the lipoyl domains of lipoate-dependent enzymes. The protein is Lipoate-protein ligase A of Salmonella paratyphi A (strain ATCC 9150 / SARB42).